The primary structure comprises 295 residues: Tyrosine recombinase XerC (295 aa).

The Core-binding (CB) domain occupies 1 to 85 (MQTYLQKYWN…ALRQFLAFLV (85 aa)). A Tyr recombinase domain is found at 106-285 (HLPKNINAEQ…NFQHLAEVYD (180 aa)). Catalysis depends on residues Arg-145, Lys-169, His-237, Arg-240, and His-263. The active-site O-(3'-phospho-DNA)-tyrosine intermediate is the Tyr-272.

Belongs to the 'phage' integrase family. XerC subfamily. As to quaternary structure, forms a cyclic heterotetrameric complex composed of two molecules of XerC and two molecules of XerD.

It is found in the cytoplasm. Site-specific tyrosine recombinase, which acts by catalyzing the cutting and rejoining of the recombining DNA molecules. The XerC-XerD complex is essential to convert dimers of the bacterial chromosome into monomers to permit their segregation at cell division. It also contributes to the segregational stability of plasmids. The chain is Tyrosine recombinase XerC from Mannheimia succiniciproducens (strain KCTC 0769BP / MBEL55E).